Here is a 504-residue protein sequence, read N- to C-terminus: ATP synthase subunit alpha (504 aa).

169–176 lines the ATP pocket; that stretch reads GDRQTGKT.

This sequence belongs to the ATPase alpha/beta chains family. As to quaternary structure, F-type ATPases have 2 components, CF(1) - the catalytic core - and CF(0) - the membrane proton channel. CF(1) has five subunits: alpha(3), beta(3), gamma(1), delta(1), epsilon(1). CF(0) has three main subunits: a(1), b(2) and c(9-12). The alpha and beta chains form an alternating ring which encloses part of the gamma chain. CF(1) is attached to CF(0) by a central stalk formed by the gamma and epsilon chains, while a peripheral stalk is formed by the delta and b chains.

It localises to the cell membrane. It catalyses the reaction ATP + H2O + 4 H(+)(in) = ADP + phosphate + 5 H(+)(out). Functionally, produces ATP from ADP in the presence of a proton gradient across the membrane. The alpha chain is a regulatory subunit. The sequence is that of ATP synthase subunit alpha from Clostridium botulinum (strain Alaska E43 / Type E3).